The following is a 221-amino-acid chain: Thiamine-phosphate synthase (221 aa).

Residues 49-53 (QFREK) and Asn85 each bind 4-amino-2-methyl-5-(diphosphooxymethyl)pyrimidine. Residues Asp86 and Asp105 each coordinate Mg(2+). Ser124 contributes to the 4-amino-2-methyl-5-(diphosphooxymethyl)pyrimidine binding site. 151–153 (TQS) is a 2-[(2R,5Z)-2-carboxy-4-methylthiazol-5(2H)-ylidene]ethyl phosphate binding site. Lys154 contacts 4-amino-2-methyl-5-(diphosphooxymethyl)pyrimidine. Residues Gly183 and 203–204 (IS) contribute to the 2-[(2R,5Z)-2-carboxy-4-methylthiazol-5(2H)-ylidene]ethyl phosphate site.

The protein belongs to the thiamine-phosphate synthase family. It depends on Mg(2+) as a cofactor.

The enzyme catalyses 2-[(2R,5Z)-2-carboxy-4-methylthiazol-5(2H)-ylidene]ethyl phosphate + 4-amino-2-methyl-5-(diphosphooxymethyl)pyrimidine + 2 H(+) = thiamine phosphate + CO2 + diphosphate. It catalyses the reaction 2-(2-carboxy-4-methylthiazol-5-yl)ethyl phosphate + 4-amino-2-methyl-5-(diphosphooxymethyl)pyrimidine + 2 H(+) = thiamine phosphate + CO2 + diphosphate. The catalysed reaction is 4-methyl-5-(2-phosphooxyethyl)-thiazole + 4-amino-2-methyl-5-(diphosphooxymethyl)pyrimidine + H(+) = thiamine phosphate + diphosphate. It functions in the pathway cofactor biosynthesis; thiamine diphosphate biosynthesis; thiamine phosphate from 4-amino-2-methyl-5-diphosphomethylpyrimidine and 4-methyl-5-(2-phosphoethyl)-thiazole: step 1/1. In terms of biological role, condenses 4-methyl-5-(beta-hydroxyethyl)thiazole monophosphate (THZ-P) and 2-methyl-4-amino-5-hydroxymethyl pyrimidine pyrophosphate (HMP-PP) to form thiamine monophosphate (TMP). The polypeptide is Thiamine-phosphate synthase (Histophilus somni (strain 129Pt) (Haemophilus somnus)).